A 620-amino-acid chain; its full sequence is Membrane protein insertase YidC (620 aa).

6 helical membrane-spanning segments follow: residues 5-25 (QIIG…FMST), 343-363 (LGWP…FDGL), 366-386 (VFSS…LVLL), 436-456 (LSGC…FNFF), 482-502 (LPFT…LMTI), and 529-549 (PVVF…YYFV).

The protein belongs to the OXA1/ALB3/YidC family. Type 1 subfamily. Interacts with the Sec translocase complex via SecD. Specifically interacts with transmembrane segments of nascent integral membrane proteins during membrane integration.

The protein localises to the cell inner membrane. Required for the insertion and/or proper folding and/or complex formation of integral membrane proteins into the membrane. Involved in integration of membrane proteins that insert both dependently and independently of the Sec translocase complex, as well as at least some lipoproteins. Aids folding of multispanning membrane proteins. The chain is Membrane protein insertase YidC from Cytophaga hutchinsonii (strain ATCC 33406 / DSM 1761 / CIP 103989 / NBRC 15051 / NCIMB 9469 / D465).